The chain runs to 149 residues: Transcription antitermination protein NusB (149 aa).

The protein belongs to the NusB family.

In terms of biological role, involved in transcription antitermination. Required for transcription of ribosomal RNA (rRNA) genes. Binds specifically to the boxA antiterminator sequence of the ribosomal RNA (rrn) operons. The sequence is that of Transcription antitermination protein NusB from Chromobacterium violaceum (strain ATCC 12472 / DSM 30191 / JCM 1249 / CCUG 213 / NBRC 12614 / NCIMB 9131 / NCTC 9757 / MK).